Consider the following 570-residue polypeptide: NADPH oxidase 2 (570 aa).

At 2 to 9 (GNWAVNEG) the chain is on the cytoplasmic side. Residues 10–36 (LSIFVILVWLGLNVFLFVWYYRVYDIP) traverse the membrane as a helical segment. Over 37–46 (PKFFYTRKLL) the chain is Extracellular. A helical membrane pass occupies residues 47–72 (GSALALARAPAACLNFNCMLILLPVC). The region spanning 54–286 (RAPAACLNFN…MFLYLCERLV (233 aa)) is the Ferric oxidoreductase domain. Topologically, residues 73-95 (RNLLSFLRGSSACCSTRVRRQLD) are cytoplasmic. Residues 96–130 (RNLTFHKMVAWMIALHSAIHTIAHLFNVEWCVNAR) form a helical membrane-spanning segment. Heme b-binding residues include histidine 101 and histidine 115. The Extracellular segment spans residues 131–163 (VNNSDPYSVALSELGDRQNESYLNFARKRIKNP). N-linked (GlcNAc...) asparagine glycans are attached at residues asparagine 132 and asparagine 149. Lysine 161 is covalently cross-linked (Glycyl lysine isopeptide (Lys-Gly) (interchain with G-Cter in ubiquitin)). A helical transmembrane segment spans residues 164–194 (EGGLYLAVTLLAGITGVVITLCLILIITSST). At 195–203 (KTIRRSYFE) the chain is on the cytoplasmic side. Residues arginine 199 and serine 200 each contribute to the FAD site. Residues 204–222 (VFWYTHHLFVIFFIGLAIH) form a helical membrane-spanning segment. The heme b site is built by tryptophan 206, histidine 209, histidine 222, arginine 226, and isoleucine 227. The Extracellular segment spans residues 223–267 (GAERIVRGQTAESLAVHNITVCEQKISEWGKIKECPIPQFAGNPP). An N-linked (GlcNAc...) asparagine glycan is attached at asparagine 240. Residue lysine 255 forms a Glycyl lysine isopeptide (Lys-Gly) (interchain with G-Cter in ubiquitin) linkage. Heme b contacts are provided by methionine 268, tyrosine 280, and arginine 287. Residues 268–285 (MTWKWIVGPMFLYLCERL) form a helical membrane-spanning segment. The Cytoplasmic portion of the chain corresponds to 286–570 (VRFWRSQQKV…VHFIFNKENF (285 aa)). In terms of domain architecture, FAD-binding FR-type spans 287–397 (RFWRSQQKVV…DGPFGTASED (111 aa)). Residues lysine 294, lysine 299, lysine 306, lysine 328, and lysine 334 each participate in a glycyl lysine isopeptide (Lys-Gly) (interchain with G-Cter in ubiquitin) cross-link. Residues tryptophan 337, histidine 338, proline 339, threonine 341, histidine 354, arginine 356, tryptophan 361, and threonine 362 each contribute to the FAD site. Lysine 381 is covalently cross-linked (Glycyl lysine isopeptide (Lys-Gly) (interchain with G-Cter in ubiquitin)). NADPH-binding residues include isoleucine 411, arginine 446, and threonine 481. Lysine 506 participates in a covalent cross-link: Glycyl lysine isopeptide (Lys-Gly) (interchain with G-Cter in ubiquitin). Residue arginine 513 participates in NADPH binding. Lysine 567 is covalently cross-linked (Glycyl lysine isopeptide (Lys-Gly) (interchain with G-Cter in ubiquitin)).

In terms of assembly, component of the phagocyte NADPH oxidase core complex/cytochrome b558 complex, composed of CYBB (heavy chain (beta)) and CYBA (light chain (alpha)). Component of the phagocyte NADPH oxidase complex composed of an obligatory core heterodimer formed by the membrane proteins CYBA and CYBB and the cytosolic regulatory subunits NCF1/p47-phox, NCF2/p67-phox, NCF4/p40-phox and the small GTPase RAC1 or RAC2. Interacts with NCF1 (phosphorylated form). Interacts with NCF2; the interaction is enhanced in the presence of GBP7. Interacts with RAC2. Interacts with RAC1. Interacts with calprotectin (S100A8/9). Interacts with NRROS; the interaction is direct and impairs formation of a stable NADPH oxidase complex. Interacts with CYBC1; CYBC1 may act as a chaperone stabilizing Cytochrome b-245 heterodimer. The CYBA-CYBB complex interacts with GBP7. FAD serves as cofactor. Glycosylated. Post-translationally, phosphorylated on Ser and Thr residues by PKC during neutrophils activation. Phosphorylation enhances the NADPH oxidase activity and stimulates its interaction with RAC2, NCF2/p67-phox, and NCF1/p47-phox. In terms of processing, undergoes 'Lys-48'-linked polyubiquitination, likely by RNF145, triggering endoplasmic reticulum-associated degradation. In terms of tissue distribution, detected in neutrophils (at protein level).

Its subcellular location is the cell membrane. It catalyses the reaction NADPH + 2 O2 = 2 superoxide + NADP(+) + H(+). Its function is as follows. Catalytic subunit of the phagocyte NADPH oxidase complex that mediates the transfer of electrons from cytosolic NADPH to O2 to produce the superoxide anion (O2(-)). In the activated complex, electrons are first transferred from NADPH to flavin adenine dinucleotide (FAD) and subsequently transferred via two heme molecules to molecular oxygen, producing superoxide through an outer-sphere reaction. Activation of the NADPH oxidase complex is initiated by the assembly of cytosolic subunits of the NADPH oxidase complex with the core NADPH oxidase complex to form a complex at the plasma membrane or phagosomal membrane. This activation process is initiated by phosphorylation dependent binding of the cytosolic NCF1/p47-phox subunit to the C-terminus of CYBA/p22-phox. NADPH oxidase complex assembly is impaired through interaction with NRROS. This Homo sapiens (Human) protein is NADPH oxidase 2.